A 606-amino-acid chain; its full sequence is Kelch-like protein 41 (606 aa).

Ser3 carries the phosphoserine modification. The region spanning 33-100 (IDCTLKAGDK…LYSASIDLND (68 aa)) is the BTB domain. A BACK domain is found at 135-237 (CLAILRLGLL…AEKYFKDHVE (103 aa)). Kelch repeat units lie at residues 346–398 (QVYV…EVDD), 399–447 (KIYV…SHNG), 448–495 (MIYC…IHKG), 497–542 (IVIA…SLAG), and 544–599 (LYAI…TRLN).

As to quaternary structure, interacts with NRAP. Part of a complex that contains CUL3, RBX1 and KLHL41. Interacts with LASP1. Post-translationally, ubiquitinated by E3 ubiquitin ligase complex formed by CUL3 and RBX1 and probably targeted for proteasome-independent degradation. Quinone-induced oxidative stress increases its ubiquitination. As to expression, skeletal muscle. Localized between laterally fusing myofibrils in skeletal muscle (at protein level). Expressed at a lower level in the heart compared to skeletal muscle.

It localises to the cytoplasm. The protein localises to the cytoskeleton. The protein resides in the cell projection. Its subcellular location is the pseudopodium. It is found in the ruffle. It localises to the myofibril. The protein localises to the sarcomere. The protein resides in the m line. Its subcellular location is the sarcoplasmic reticulum membrane. It is found in the endoplasmic reticulum membrane. Involved in skeletal muscle development and differentiation. Regulates proliferation and differentiation of myoblasts and plays a role in myofibril assembly by promoting lateral fusion of adjacent thin fibrils into mature, wide myofibrils. Required for pseudopod elongation in transformed cells. This chain is Kelch-like protein 41 (Klhl41), found in Mus musculus (Mouse).